A 943-amino-acid chain; its full sequence is Calcium-activated chloride channel regulator 2 (943 aa).

Residues 1–31 (MTQRSIAGPICNLKFVTLLVALSSELPFLGA) form the signal peptide. At 32–901 (GVQLQDNGYN…SDPVPARDYL (870 aa)) the chain is on the extracellular side. The interval 54–205 (NQNLISNIKE…CSSDITGIFV (152 aa)) is metalloprotease domain. N-linked (GlcNAc...) asparagine glycosylation is found at Asn-74 and Asn-150. His-164 provides a ligand contact to Zn(2+). Residue Glu-165 is part of the active site. The Zn(2+) site is built by His-168 and Asp-175. The N-linked (GlcNAc...) asparagine glycan is linked to Asn-231. Positions 311-483 (VVCLVLDVSS…NSMIDAFSRI (173 aa)) constitute a VWFA domain. Residues Asn-522 and Asn-822 are each glycosylated (N-linked (GlcNAc...) asparagine). The helical transmembrane segment at 902–922 (ILKGVLTAMGLIGIICLIIVV) threads the bilayer. Residues 923-943 (THHTLSRKKRADKKENGTKLL) lie on the Cytoplasmic side of the membrane.

The protein belongs to the CLCR family. Post-translationally, the 141 kDa mature form is autoproteolytically cleaved by the metalloprotease domain, producing a 109 kDa form and a 35 kDa form. The cleavage is necessary for calcium-activated chloride channel (CaCC) activation activity. In terms of processing, N-glycosylated. As to expression, expressed in cornea, skin, vagina, esophagus, and larynx (at protein level). Expressed in trachea and mammary gland. Weakly expressed in testis and kidney. Highly expressed in corneal epithelium, colon and trachea. Moderately expressed in brain, urogenital organs, bladder, uterus and prostate. Highly expressed in tissues containing stratified epithelium including cornea, esophagus, larynx, skin and vagina than those tissues which contain only epithelial monolayers. Expressed in normal breast epithelium but not in breast cancer. Highly expressed during epithelial stratification. Expressed in endothelial cells of lung. Expressed selectively in endothelia of small pulmonary arteries, arterioles, and subpleural and interlobular venules.

It localises to the cell membrane. It is found in the basal cell membrane. The protein localises to the cell junction. Its subcellular location is the secreted. In terms of biological role, plays a role in modulating chloride current across the plasma membrane in a calcium-dependent manner, and cell adhesion. Involved in basal cell adhesion and/or stratification of squamous epithelia. May act as a tumor suppressor in breast and colorectal cancer. Plays a key role for cell adhesion in the beginning stages of lung metastasis via the binding to ITGB4. The protein is Calcium-activated chloride channel regulator 2 (CLCA2) of Homo sapiens (Human).